Reading from the N-terminus, the 358-residue chain is Probable D-xylulose reductase A (358 aa).

The Zn(2+) site is built by Cys-47, His-72, and Glu-73. 182-187 (GAGPVG) contacts NAD(+).

It belongs to the zinc-containing alcohol dehydrogenase family. Zn(2+) serves as cofactor.

It catalyses the reaction xylitol + NAD(+) = D-xylulose + NADH + H(+). It functions in the pathway carbohydrate degradation; L-arabinose degradation via L-arabinitol; D-xylulose 5-phosphate from L-arabinose (fungal route): step 4/5. Functionally, xylitol dehydrogenase which catalyzes the conversion of xylitol to D-xylulose. Xylose is a major component of hemicelluloses such as xylan. Most fungi utilize D-xylose via three enzymatic reactions, xylose reductase (XR), xylitol dehydrogenase (XDH), and xylulokinase, to form xylulose 5-phosphate, which enters pentose phosphate pathway. The polypeptide is Probable D-xylulose reductase A (xdhA) (Aspergillus niger (strain ATCC MYA-4892 / CBS 513.88 / FGSC A1513)).